Reading from the N-terminus, the 936-residue chain is Translation initiation factor IF-2 (936 aa).

Residues 102–332 are disordered; it reads PEPGPVLKKD…SGSRQKFRKM (231 aa). Over residues 108-119 the composition is skewed to basic and acidic residues; the sequence is LKKDHVHEEPEK. A compositionally biased stretch (acidic residues) spans 127–137; it reads SEPEVEPEVEP. Positions 151 to 160 are enriched in low complexity; it reads PTEAVSVPEP. Residues 182-194 show a composition bias toward polar residues; the sequence is QSSTMKAQASPEM. Composition is skewed to basic and acidic residues over residues 217–227 and 237–267; these read SALDRGSESDR and KEQA…EAKT. Residues 272–281 show a composition bias toward low complexity; the sequence is KAAGTTGSAA. Residues 287-297 show a composition bias toward basic residues; the sequence is SKKKKGGKKKK. Residues 433 to 603 enclose the tr-type G domain; that stretch reads IRPPVVTIMG…LMEAEIRELK (171 aa). The G1 stretch occupies residues 442–449; sequence GHVDHGKT. Position 442–449 (442–449) interacts with GTP; that stretch reads GHVDHGKT. A G2 region spans residues 467–471; it reads GITQH. The segment at 489 to 492 is G3; that stretch reads DTPG. Residues 489–493 and 543–546 contribute to the GTP site; these read DTPGH and NKID. The G4 stretch occupies residues 543 to 546; the sequence is NKID. A G5 region spans residues 579–581; it reads SAK.

This sequence belongs to the TRAFAC class translation factor GTPase superfamily. Classic translation factor GTPase family. IF-2 subfamily.

It localises to the cytoplasm. Functionally, one of the essential components for the initiation of protein synthesis. Protects formylmethionyl-tRNA from spontaneous hydrolysis and promotes its binding to the 30S ribosomal subunits. Also involved in the hydrolysis of GTP during the formation of the 70S ribosomal complex. The polypeptide is Translation initiation factor IF-2 (Prosthecochloris aestuarii (strain DSM 271 / SK 413)).